The sequence spans 205 residues: Recombination protein RecR (205 aa).

The C4-type zinc-finger motif lies at C58–C73. The Toprim domain occupies R81–P177.

Belongs to the RecR family.

Functionally, may play a role in DNA repair. It seems to be involved in an RecBC-independent recombinational process of DNA repair. It may act with RecF and RecO. The polypeptide is Recombination protein RecR (Cytophaga hutchinsonii (strain ATCC 33406 / DSM 1761 / CIP 103989 / NBRC 15051 / NCIMB 9469 / D465)).